The following is a 466-amino-acid chain: MITLYNTLTRQKEVFKPIEPGKVKMYVCGPTVYNYIHIGNARPAINYDVVRRYFEYQGYNVEYVSNFTDVDDKLIKRSQELNQSVPEIAEKYIAAFHEDVGALNVRKATSNPRVMDHMDDIIQFIKDLVDQGYAYESGGDVYFRTRKFEGYGKLSHQSIDDLKVGARIDAGEHKEDALDFTLWKKAKPGEISWDSPFGEGRPGWHIECSVMAFHELGPTIDIHAGGSDLQFPHHENEIAQSEAHNHAPFANYWMHNGFINIDNEKMSKSLGNFILVHDIIKEVDPDVLRFFMISVHYRSPINYNLELVESARSGLERIRNSYQLIEERAQIATNIENQQTYIDQIDAILNRFETVMNDDFNTANAITAWYDLAKLANKYVLENTTSTEVIDKFKAVYQIFSDVLGVPLKSKNADELLDEDVEKLIEERNEARKNKDFARADEIRDMLKSQNIILEDTPQGVRFKRG.

Cys-28 contributes to the Zn(2+) binding site. Positions Pro-30–Asn-40 match the 'HIGH' region motif. Zn(2+) contacts are provided by Cys-208, His-233, and Glu-237. The short motif at Lys-265–Ser-269 is the 'KMSKS' region element. Position 268 (Lys-268) interacts with ATP.

The protein belongs to the class-I aminoacyl-tRNA synthetase family. Monomer. It depends on Zn(2+) as a cofactor.

Its subcellular location is the cytoplasm. It catalyses the reaction tRNA(Cys) + L-cysteine + ATP = L-cysteinyl-tRNA(Cys) + AMP + diphosphate. The sequence is that of Cysteine--tRNA ligase from Staphylococcus aureus (strain USA300).